The primary structure comprises 391 residues: Tryptophan synthase beta chain (391 aa).

Position 86 is an N6-(pyridoxal phosphate)lysine (K86).

This sequence belongs to the TrpB family. As to quaternary structure, tetramer of two alpha and two beta chains. It depends on pyridoxal 5'-phosphate as a cofactor.

It carries out the reaction (1S,2R)-1-C-(indol-3-yl)glycerol 3-phosphate + L-serine = D-glyceraldehyde 3-phosphate + L-tryptophan + H2O. Its pathway is amino-acid biosynthesis; L-tryptophan biosynthesis; L-tryptophan from chorismate: step 5/5. Functionally, the beta subunit is responsible for the synthesis of L-tryptophan from indole and L-serine. The protein is Tryptophan synthase beta chain of Vibrio metschnikovii.